Here is a 53-residue protein sequence, read N- to C-terminus: uncharacterized protein (53 aa).

It is found in the plastid. It localises to the chloroplast. This is an uncharacterized protein from Guillardia theta (Cryptophyte).